Here is a 198-residue protein sequence, read N- to C-terminus: DnaJ homolog subfamily C member 12 (198 aa).

M1 is subject to N-acetylmethionine. Positions 14 to 79 (DYYTLLGCDE…ESRARYDHWR (66 aa)) constitute a J domain. The interval 121 to 183 (TNTAQNKERS…CGHLHFRWSG (63 aa)) is disordered. Residues 126-156 (NKERSEQRETKQGDPDSTPEKMMQKESESPE) show a composition bias toward basic and acidic residues. Phosphoserine occurs at positions 160, 166, and 182.

As to quaternary structure, interacts with HSPA8. Interacts with TPH1. Interacts with TPH2.

It is found in the cytoplasm. Functionally, probable co-chaperone that participates in the proper folding of biopterin-dependent aromatic amino acid hydroxylases, which include phenylalanine-4-hydroxylase (PAH), tyrosine 3-monooxygenase (TH) and peripheral and neuronal tryptophan hydroxylases (TPH1 and TPH2). In Rattus norvegicus (Rat), this protein is DnaJ homolog subfamily C member 12 (Dnajc12).